Consider the following 1375-residue polypeptide: Mediator of RNA polymerase II transcription subunit 13 (1375 aa).

Residues 1-51 (MKASEMARPPMRPGNPHAFASPATTPSRTASPNNAQGANVRTTQGGNQAGA) are disordered. Positions 22 to 51 (PATTPSRTASPNNAQGANVRTTQGGNQAGA) are enriched in polar residues. Coiled-coil stretches lie at residues 182-216 (ADDSNRRTSKKKAKMDSLEQNIEKWRMSVQRWLSR) and 297-324 (QLERDKILDMQRKAKKAEEDAMRRKDEA). Positions 313 to 324 (AEEDAMRRKDEA) are enriched in basic and acidic residues. Disordered stretches follow at residues 313-333 (AEEDAMRRKDEAPGLYPSSPF), 350-370 (YPTPPDGIVPGTGISSTDTPS), 397-417 (YTTTDNQQHASTSPTFPAPLE), 537-581 (ATSP…PASL), 660-689 (RAVSDDSASDSESETSDMSEGSPEDPVDTH), 841-862 (QAKGQQRPPPRKPNESNAIPSN), and 1233-1285 (TPTT…AADP). The span at 397 to 411 (YTTTDNQQHASTSPT) shows a compositional bias: polar residues. Residues 666-685 (SASDSESETSDMSEGSPEDP) are compositionally biased toward acidic residues. The segment covering 1233 to 1259 (TPTTPAPSNSSAQANTNTPGSTPQTGV) has biased composition (polar residues).

Belongs to the Mediator complex subunit 13 family. In terms of assembly, component of the SRB8-11 complex, which itself associates with the Mediator complex.

Its subcellular location is the nucleus. Functionally, component of the SRB8-11 complex. The SRB8-11 complex is a regulatory module of the Mediator complex which is itself involved in regulation of basal and activated RNA polymerase II-dependent transcription. The SRB8-11 complex may be involved in the transcriptional repression of a subset of genes regulated by Mediator. It may inhibit the association of the Mediator complex with RNA polymerase II to form the holoenzyme complex. The polypeptide is Mediator of RNA polymerase II transcription subunit 13 (SSN2) (Phaeosphaeria nodorum (strain SN15 / ATCC MYA-4574 / FGSC 10173) (Glume blotch fungus)).